The primary structure comprises 346 residues: Probable WRKY transcription factor 54 (346 aa).

The disordered stretch occupies residues 109–130 (PVSCNGGDSGESKKKRLGVGKG). Over residues 121 to 130 (KKKRLGVGKG) the composition is skewed to basic residues. A DNA-binding region (WRKY) is located at residues 146–214 (VEAKSSEDRY…YIGYHTCTAN (69 aa)). A compositionally biased stretch (basic and acidic residues) spans 267–282 (VKEEQNNNGDQSKDYY). The segment at 267–286 (VKEEQNNNGDQSKDYYEGSS) is disordered.

It belongs to the WRKY group III family. Interacts with WRKY30. Binds to BZR2/BES1 to cooperatively regulate the expression of target genes. Interacts with ASK7/BIN2. Post-translationally, phosphorylated and destabilized by ASK7/BIN2. As to expression, expressed in leaves.

Its subcellular location is the nucleus. In terms of biological role, transcription factor. Interacts specifically with the W box (5'-(T)TGAC[CT]-3'), a frequently occurring elicitor-responsive cis-acting element. Together with WRKY70, negative regulator of developmental senescence, probably via the regulation of several senescence-associated markers genes. Positive regulator of EDS1-dependent defense against E.amylovora. In collaboration with WRKY70, prevents stomatal closure and, consequently, osmotic stress tolerance. Together with WRKY46 and WRKY70, promotes brassinosteroid (BR)-regulated plant growth but prevent drought response by modulating gene expression. Negative regulator of SA biosynthesis. Prevents defense response to the necrotrophic pathogens P.carotovorum and B.cinerea, but promotes defense against biotrophic/hemibiotrophic pathogens P.syringae pv. tomato (Pst) DC3000, probably by regulating negatively the jasmonic acid (JA)/ethylene (ET) and positively the salicylic acid (SA) signaling pathways. This is Probable WRKY transcription factor 54 from Arabidopsis thaliana (Mouse-ear cress).